A 336-amino-acid chain; its full sequence is tRNA N6-adenosine threonylcarbamoyltransferase (336 aa).

Residues histidine 114 and histidine 118 each coordinate Fe cation. Substrate contacts are provided by residues 136–140 (LVSGG), aspartate 169, glycine 182, aspartate 186, and asparagine 275. Aspartate 301 contributes to the Fe cation binding site.

Belongs to the KAE1 / TsaD family. Requires Fe(2+) as cofactor.

Its subcellular location is the cytoplasm. It catalyses the reaction L-threonylcarbamoyladenylate + adenosine(37) in tRNA = N(6)-L-threonylcarbamoyladenosine(37) in tRNA + AMP + H(+). In terms of biological role, required for the formation of a threonylcarbamoyl group on adenosine at position 37 (t(6)A37) in tRNAs that read codons beginning with adenine. Is involved in the transfer of the threonylcarbamoyl moiety of threonylcarbamoyl-AMP (TC-AMP) to the N6 group of A37, together with TsaE and TsaB. TsaD likely plays a direct catalytic role in this reaction. The sequence is that of tRNA N6-adenosine threonylcarbamoyltransferase from Streptococcus pneumoniae serotype 19F (strain G54).